The primary structure comprises 436 residues: Mitochondrial distribution and morphology protein 12 (436 aa).

Positions Met1–Ile436 constitute an SMP-LTD domain. Residues Asp73–Glu84 show a composition bias toward acidic residues. 3 disordered regions span residues Asp73–Thr98, Ala184–Glu275, and Gly352–Lys380. Basic and acidic residues predominate over residues Glu85–Thr98. Composition is skewed to polar residues over residues Pro190–Lys206 and Asp222–Ser243. A compositionally biased stretch (basic and acidic residues) spans Ser244–Asp255. Residues Pro256–Asn267 show a composition bias toward polar residues.

This sequence belongs to the MDM12 family. Component of the ER-mitochondria encounter structure (ERMES) or MDM complex, composed of mmm1, mdm10, mdm12 and mdm34. A mmm1 homodimer associates with one molecule of mdm12 on each side in a pairwise head-to-tail manner, and the SMP-LTD domains of mmm1 and mdm12 generate a continuous hydrophobic tunnel for phospholipid trafficking.

The protein localises to the mitochondrion outer membrane. Its subcellular location is the endoplasmic reticulum membrane. Functionally, component of the ERMES/MDM complex, which serves as a molecular tether to connect the endoplasmic reticulum (ER) and mitochondria. Components of this complex are involved in the control of mitochondrial shape and protein biogenesis, and function in nonvesicular lipid trafficking between the ER and mitochondria. Mdm12 is required for the interaction of the ER-resident membrane protein mmm1 and the outer mitochondrial membrane-resident beta-barrel protein mdm10. The mdm12-mmm1 subcomplex functions in the major beta-barrel assembly pathway that is responsible for biogenesis of all mitochondrial outer membrane beta-barrel proteins, and acts in a late step after the SAM complex. The mdm10-mdm12-mmm1 subcomplex further acts in the TOM40-specific pathway after the action of the mdm12-mmm1 complex. Essential for establishing and maintaining the structure of mitochondria and maintenance of mtDNA nucleoids. The polypeptide is Mitochondrial distribution and morphology protein 12 (Emericella nidulans (strain FGSC A4 / ATCC 38163 / CBS 112.46 / NRRL 194 / M139) (Aspergillus nidulans)).